The following is a 334-amino-acid chain: Glyceraldehyde-3-phosphate dehydrogenase (334 aa).

NAD(+)-binding positions include 12-13 (TI) and Gly-111. 140 to 142 (SCN) serves as a coordination point for D-glyceraldehyde 3-phosphate. Cys-141 functions as the Nucleophile in the catalytic mechanism. Arg-167 lines the NAD(+) pocket. 192 to 193 (HG) contributes to the D-glyceraldehyde 3-phosphate binding site. An NAD(+)-binding site is contributed by Gln-298.

The protein belongs to the glyceraldehyde-3-phosphate dehydrogenase family. Homotetramer.

Its subcellular location is the cytoplasm. It catalyses the reaction D-glyceraldehyde 3-phosphate + phosphate + NADP(+) = (2R)-3-phospho-glyceroyl phosphate + NADPH + H(+). It carries out the reaction D-glyceraldehyde 3-phosphate + phosphate + NAD(+) = (2R)-3-phospho-glyceroyl phosphate + NADH + H(+). It functions in the pathway carbohydrate degradation; glycolysis; pyruvate from D-glyceraldehyde 3-phosphate: step 1/5. This Pyrococcus abyssi (strain GE5 / Orsay) protein is Glyceraldehyde-3-phosphate dehydrogenase (gap).